The sequence spans 824 residues: Sphingomyelin phosphodiesterase 4 (824 aa).

A helical transmembrane segment spans residues 777 to 797 (LAFLFIFYILGSLLSLGPLIC).

The cofactor is Mg(2+).

The protein localises to the endoplasmic reticulum membrane. Its subcellular location is the golgi apparatus membrane. It localises to the nucleus envelope. It is found in the cell membrane. The protein resides in the sarcolemma. The catalysed reaction is a sphingomyelin + H2O = phosphocholine + an N-acylsphing-4-enine + H(+). Its function is as follows. Catalyzes the hydrolysis of membrane sphingomyelin to form phosphorylcholine and ceramide. It has a relevant role in the homeostasis of membrane sphingolipids, thereby influencing membrane integrity, and endoplasmic reticulum organization and function. May sensitize cells to DNA damage-induced apoptosis. In Xenopus laevis (African clawed frog), this protein is Sphingomyelin phosphodiesterase 4 (smpd4).